A 106-amino-acid chain; its full sequence is Large ribosomal subunit protein uL23 (106 aa).

Belongs to the universal ribosomal protein uL23 family. In terms of assembly, part of the 50S ribosomal subunit. Contacts protein L29, and trigger factor when it is bound to the ribosome.

In terms of biological role, one of the early assembly proteins it binds 23S rRNA. One of the proteins that surrounds the polypeptide exit tunnel on the outside of the ribosome. Forms the main docking site for trigger factor binding to the ribosome. The protein is Large ribosomal subunit protein uL23 of Neisseria meningitidis serogroup A / serotype 4A (strain DSM 15465 / Z2491).